A 144-amino-acid chain; its full sequence is Cytochrome c oxidase subunit 4 isoform 1, mitochondrial (144 aa).

The Mitochondrial matrix segment spans residues 1 to 73 (SVVKSEDFSL…SFAEMNRGSN (73 aa)). Lysine 4 is modified (N6-acetyllysine; alternate). Lysine 4 is subject to N6-succinyllysine; alternate. Lysine 28 is subject to N6-acetyllysine. Residues serine 31 and serine 33 each carry the phosphoserine modification. The residue at position 35 (lysine 35) is an N6-acetyllysine; alternate. Residue lysine 35 is modified to N6-succinyllysine; alternate. Lysine 42 is modified (N6-acetyllysine). The chain crosses the membrane as a helical span at residues 74-99 (EWKTVVGGAMFFIGFTALIIMWQKHY). Topologically, residues 100 to 144 (VYGPLPQTFDKEWVGKQTKRMLDMKVNPIQGLASKWDYEKNEWKK) are mitochondrial intermembrane.

Belongs to the cytochrome c oxidase IV family. As to quaternary structure, component of the cytochrome c oxidase (complex IV, CIV), a multisubunit enzyme composed of 14 subunits. The complex is composed of a catalytic core of 3 subunits MT-CO1, MT-CO2 and MT-CO3, encoded in the mitochondrial DNA, and 11 supernumerary subunits COX4I, COX5A, COX5B, COX6A, COX6B, COX6C, COX7A, COX7B, COX7C, COX8 and NDUFA4, which are encoded in the nuclear genome. The complex exists as a monomer or a dimer and forms supercomplexes (SCs) in the inner mitochondrial membrane with NADH-ubiquinone oxidoreductase (complex I, CI) and ubiquinol-cytochrome c oxidoreductase (cytochrome b-c1 complex, complex III, CIII), resulting in different assemblies (supercomplex SCI(1)III(2)IV(1) and megacomplex MCI(2)III(2)IV(2)). Interacts with PHB2; the interaction decreases in absence of SPHK2. Interacts with AFG1L. Interacts with ABCB7; this interaction allows the regulation of cellular iron homeostasis and cellular reactive oxygen species (ROS) levels in cardiomyocytes. Interacts with FLVCR2; this interaction occurs in the absence of heme and is disrupted upon heme binding. Interacts with IRGC.

The protein resides in the mitochondrion inner membrane. It functions in the pathway energy metabolism; oxidative phosphorylation. Component of the cytochrome c oxidase, the last enzyme in the mitochondrial electron transport chain which drives oxidative phosphorylation. The respiratory chain contains 3 multisubunit complexes succinate dehydrogenase (complex II, CII), ubiquinol-cytochrome c oxidoreductase (cytochrome b-c1 complex, complex III, CIII) and cytochrome c oxidase (complex IV, CIV), that cooperate to transfer electrons derived from NADH and succinate to molecular oxygen, creating an electrochemical gradient over the inner membrane that drives transmembrane transport and the ATP synthase. Cytochrome c oxidase is the component of the respiratory chain that catalyzes the reduction of oxygen to water. Electrons originating from reduced cytochrome c in the intermembrane space (IMS) are transferred via the dinuclear copper A center (CU(A)) of subunit 2 and heme A of subunit 1 to the active site in subunit 1, a binuclear center (BNC) formed by heme A3 and copper B (CU(B)). The BNC reduces molecular oxygen to 2 water molecules using 4 electrons from cytochrome c in the IMS and 4 protons from the mitochondrial matrix. This is Cytochrome c oxidase subunit 4 isoform 1, mitochondrial (COX4I1) from Hylobates agilis (Agile gibbon).